The sequence spans 163 residues: ATP synthase subunit b 1 (163 aa).

A helical transmembrane segment spans residues 7-27 (AETWVAVAFVILMALFAYLGV).

The protein belongs to the ATPase B chain family. In terms of assembly, F-type ATPases have 2 components, F(1) - the catalytic core - and F(0) - the membrane proton channel. F(1) has five subunits: alpha(3), beta(3), gamma(1), delta(1), epsilon(1). F(0) has three main subunits: a(1), b(2) and c(10-14). The alpha and beta chains form an alternating ring which encloses part of the gamma chain. F(1) is attached to F(0) by a central stalk formed by the gamma and epsilon chains, while a peripheral stalk is formed by the delta and b chains.

Its subcellular location is the cell inner membrane. Functionally, f(1)F(0) ATP synthase produces ATP from ADP in the presence of a proton or sodium gradient. F-type ATPases consist of two structural domains, F(1) containing the extramembraneous catalytic core and F(0) containing the membrane proton channel, linked together by a central stalk and a peripheral stalk. During catalysis, ATP synthesis in the catalytic domain of F(1) is coupled via a rotary mechanism of the central stalk subunits to proton translocation. Component of the F(0) channel, it forms part of the peripheral stalk, linking F(1) to F(0). The chain is ATP synthase subunit b 1 from Rhodopseudomonas palustris (strain BisB5).